The primary structure comprises 559 residues: DNA ligase (559 aa).

Glu247 contributes to the ATP binding site. Lys249 functions as the N6-AMP-lysine intermediate in the catalytic mechanism. ATP is bound by residues Arg254, Arg269, Glu299, Phe339, Arg414, and Lys420.

This sequence belongs to the ATP-dependent DNA ligase family. Requires Mg(2+) as cofactor.

It catalyses the reaction ATP + (deoxyribonucleotide)n-3'-hydroxyl + 5'-phospho-(deoxyribonucleotide)m = (deoxyribonucleotide)n+m + AMP + diphosphate.. It carries out the reaction NAD(+) + (deoxyribonucleotide)n-3'-hydroxyl + 5'-phospho-(deoxyribonucleotide)m = (deoxyribonucleotide)n+m + AMP + beta-nicotinamide D-nucleotide.. In terms of biological role, DNA ligase that seals nicks in double-stranded DNA during DNA replication, DNA recombination and DNA repair. Shows high activity with either ATP or NAD(+). The chain is DNA ligase from Thermococcus fumicolans.